The primary structure comprises 118 residues: Small nuclear ribonucleoprotein Sm D2 (118 aa).

The tract at residues 1–31 (MSLLNKPKSEMTPEELQKREEEEFNTGPLSV) is disordered. S2 carries the post-translational modification N-acetylserine. Glycyl lysine isopeptide (Lys-Gly) (interchain with G-Cter in SUMO2) cross-links involve residues K6 and K8. Residues 7-21 (PKSEMTPEELQKREE) are compositionally biased toward basic and acidic residues. S9 is modified (phosphoserine). Phosphothreonine is present on T12. The Sm domain maps to 29-115 (LSVLTQSVKN…VIVVLRNPLI (87 aa)).

This sequence belongs to the snRNP core protein family. As to quaternary structure, core component of the spliceosomal U1, U2, U4 and U5 small nuclear ribonucleoproteins (snRNPs), the building blocks of the spliceosome. Most spliceosomal snRNPs contain a common set of Sm proteins, SNRPB, SNRPD1, SNRPD2, SNRPD3, SNRPE, SNRPF and SNRPG that assemble in a heptameric protein ring on the Sm site of the small nuclear RNA to form the core snRNP. Component of the U1 snRNP. The U1 snRNP is composed of the U1 snRNA and the 7 core Sm proteins SNRPB, SNRPD1, SNRPD2, SNRPD3, SNRPE, SNRPF and SNRPG, and at least three U1 snRNP-specific proteins SNRNP70/U1-70K, SNRPA/U1-A and SNRPC/U1-C. Component of the U4/U6-U5 tri-snRNP complex composed of the U4, U6 and U5 snRNAs and at least PRPF3, PRPF4, PRPF6, PRPF8, PRPF31, SNRNP200, TXNL4A, SNRNP40, SNRPB, SNRPD1, SNRPD2, SNRPD3, SNRPE, SNRPF, SNRPG, DDX23, CD2BP2, PPIH, SNU13, EFTUD2, SART1 and USP39, plus LSM2, LSM3, LSM4, LSM5, LSM6, LSM7 and LSM8. Component of the minor spliceosome, which splices U12-type introns. Part of the SMN-Sm complex that contains SMN1, GEMIN2/SIP1, DDX20/GEMIN3, GEMIN4, GEMIN5, GEMIN6, GEMIN7, GEMIN8, STRAP/UNRIP and the Sm proteins SNRPB, SNRPD1, SNRPD2, SNRPD3, SNRPE, SNRPF and SNRPG; catalyzes core snRNPs assembly. Forms a 6S pICln-Sm complex composed of CLNS1A/pICln, SNRPD1, SNRPD2, SNRPE, SNRPF and SNRPG; ring-like structure where CLNS1A/pICln mimics additional Sm proteins and which is unable to assemble into the core snRNP. Interacts with SMN1; the interaction is direct. Interacts with GEMIN2; the interaction is direct. Interacts with SNRPD1; the interaction is direct. Interacts with SNRPF; the interaction is direct.

It is found in the cytoplasm. The protein localises to the cytosol. Its subcellular location is the nucleus. In terms of biological role, plays a role in pre-mRNA splicing as a core component of the spliceosomal U1, U2, U4 and U5 small nuclear ribonucleoproteins (snRNPs), the building blocks of the spliceosome. Component of both the pre-catalytic spliceosome B complex and activated spliceosome C complexes. As a component of the minor spliceosome, involved in the splicing of U12-type introns in pre-mRNAs. In Homo sapiens (Human), this protein is Small nuclear ribonucleoprotein Sm D2 (SNRPD2).